We begin with the raw amino-acid sequence, 302 residues long: Sulfate adenylyltransferase subunit 2 (302 aa).

The protein belongs to the PAPS reductase family. CysD subfamily. Heterodimer composed of CysD, the smaller subunit, and CysN.

It catalyses the reaction sulfate + ATP + H(+) = adenosine 5'-phosphosulfate + diphosphate. The protein operates within sulfur metabolism; hydrogen sulfide biosynthesis; sulfite from sulfate: step 1/3. Functionally, with CysN forms the ATP sulfurylase (ATPS) that catalyzes the adenylation of sulfate producing adenosine 5'-phosphosulfate (APS) and diphosphate, the first enzymatic step in sulfur assimilation pathway. APS synthesis involves the formation of a high-energy phosphoric-sulfuric acid anhydride bond driven by GTP hydrolysis by CysN coupled to ATP hydrolysis by CysD. In Shigella dysenteriae serotype 1 (strain Sd197), this protein is Sulfate adenylyltransferase subunit 2.